A 216-amino-acid polypeptide reads, in one-letter code: Histidine biosynthesis bifunctional protein HisIE (216 aa).

Positions 1–132 (MENILKELKF…KVYEAENAKI (132 aa)) are phosphoribosyl-AMP cyclohydrolase. The segment at 133–216 (LQEIYDVIVD…IKLEDIYEEA (84 aa)) is phosphoribosyl-ATP pyrophosphohydrolase.

In the N-terminal section; belongs to the PRA-CH family. This sequence in the C-terminal section; belongs to the PRA-PH family.

It localises to the cytoplasm. It catalyses the reaction 1-(5-phospho-beta-D-ribosyl)-ATP + H2O = 1-(5-phospho-beta-D-ribosyl)-5'-AMP + diphosphate + H(+). It carries out the reaction 1-(5-phospho-beta-D-ribosyl)-5'-AMP + H2O = 1-(5-phospho-beta-D-ribosyl)-5-[(5-phospho-beta-D-ribosylamino)methylideneamino]imidazole-4-carboxamide. The protein operates within amino-acid biosynthesis; L-histidine biosynthesis; L-histidine from 5-phospho-alpha-D-ribose 1-diphosphate: step 2/9. Its pathway is amino-acid biosynthesis; L-histidine biosynthesis; L-histidine from 5-phospho-alpha-D-ribose 1-diphosphate: step 3/9. This Thermoanaerobacter pseudethanolicus (strain ATCC 33223 / 39E) (Clostridium thermohydrosulfuricum) protein is Histidine biosynthesis bifunctional protein HisIE (hisI).